Consider the following 146-residue polypeptide: Hemoglobin cathodic subunit beta (146 aa).

Residues 2–146 (HFSDAERDAI…VAAALSSRYF (145 aa)) enclose the Globin domain. H63 and H92 together coordinate heme b.

Belongs to the globin family. Heterotetramer of two alpha chains and two beta chains. In terms of tissue distribution, red blood cells.

Involved in oxygen transport from gills to the various peripheral tissues. This is Hemoglobin cathodic subunit beta (hbb) from Hoplosternum littorale (Hassar).